The following is a 171-amino-acid chain: MILAILALVIATFLYGGATTVQAGCRDTLTSLSPCLYYLNGGSSSPSWSCCRQFSTVVQSSPECLCSVVNSNESSFYGFKFNRTLALNLPTACNVQTPSPSLCNTGGNVPTTLPANTPVGSPRSAPSPSGTTSPANTPSGSKKFPLSNESSSKSNVIILSFVSIALVLAII.

The signal sequence occupies residues 1–18; the sequence is MILAILALVIATFLYGGA. Intrachain disulfides connect C25/C66, C35/C50, C51/C93, and C64/C103. N72 and N82 each carry an N-linked (GlcNAc...) asparagine glycan. Positions 113–149 are disordered; the sequence is LPANTPVGSPRSAPSPSGTTSPANTPSGSKKFPLSNE. Positions 118–141 are enriched in low complexity; the sequence is PVGSPRSAPSPSGTTSPANTPSGS. S147 carries GPI-anchor amidated serine lipidation. N148 is a glycosylation site (N-linked (GlcNAc...) asparagine). The propeptide at 148-171 is removed in mature form; it reads NESSSKSNVIILSFVSIALVLAII.

The protein belongs to the plant LTP family.

Its subcellular location is the cell membrane. Its function is as follows. Probable lipid transfer protein. This Arabidopsis thaliana (Mouse-ear cress) protein is Non-specific lipid transfer protein GPI-anchored 19.